Reading from the N-terminus, the 399-residue chain is MDLQTALAEIKRGTEEILIEDELVEKLKSGKKLKIKAGFDPTAPDLHLGHTVLINKMKTFQDLGHEVVFLIGDFTGMIGDPTGKNVTRKPLTREDVLANAETYKEQVFKILDPAKTTVAFNSTWMENLGAAGMIKLAARQTVARMLERDDFKKRYASGQSIAIHEFLYPLVQGWDSVALEADVELGGTDQRFNLLMGRELQKDEGQKPQTVIMTPLLEGTDGVQKMSKSLGNYIGITDAPNDMFGKIMSISDVLMWRYYDLLSGLSIAGINAQKERVEQGTNPRDIKIELAKELIARFHSEADAQAAHDDFIQRFQKKALPDEIPELTVTIEQDSILIANLLKEANLVASTSEAMRMIKQGAVKLNGEDKITDTKLEIAKGSTAIYQVGKRKFANITVA.

Positions 41-50 (PTAPDLHLGH) match the 'HIGH' region motif. Residues 225–229 (KMSKS) carry the 'KMSKS' region motif. K228 provides a ligand contact to ATP. Residues 336–398 (ILIANLLKEA…GKRKFANITV (63 aa)) form the S4 RNA-binding domain.

The protein belongs to the class-I aminoacyl-tRNA synthetase family. TyrS type 2 subfamily. Homodimer.

The protein resides in the cytoplasm. The catalysed reaction is tRNA(Tyr) + L-tyrosine + ATP = L-tyrosyl-tRNA(Tyr) + AMP + diphosphate + H(+). In terms of biological role, catalyzes the attachment of tyrosine to tRNA(Tyr) in a two-step reaction: tyrosine is first activated by ATP to form Tyr-AMP and then transferred to the acceptor end of tRNA(Tyr). The sequence is that of Tyrosine--tRNA ligase 2 from Pseudoalteromonas translucida (strain TAC 125).